The sequence spans 280 residues: uncharacterized protein (280 aa).

Basic and acidic residues-rich tracts occupy residues 110-122, 167-177, 223-261, and 269-280; these read EKQA…ERLQ, ATGEERAECGR, ARQH…RPQQ, and DVDRSKSCLEAE. Disordered regions lie at residues 110-137, 151-177, and 219-280; these read EKQA…KTEH, HRGE…ECGR, and TIID…LEAE.

This is an uncharacterized protein from Agrobacterium vitis (Rhizobium vitis).